Consider the following 229-residue polypeptide: Large ribosomal subunit protein uL1 (229 aa).

This sequence belongs to the universal ribosomal protein uL1 family. As to quaternary structure, part of the 50S ribosomal subunit.

Binds directly to 23S rRNA. The L1 stalk is quite mobile in the ribosome, and is involved in E site tRNA release. In terms of biological role, protein L1 is also a translational repressor protein, it controls the translation of the L11 operon by binding to its mRNA. The sequence is that of Large ribosomal subunit protein uL1 from Streptococcus pyogenes serotype M3 (strain SSI-1).